Reading from the N-terminus, the 380-residue chain is Anthranilate phosphoribosyltransferase (380 aa).

Gly-109, Asn-119, Ser-121, Thr-122, Lys-142, Ser-144, and Ser-146 together coordinate 5-phospho-alpha-D-ribose 1-diphosphate. Mg(2+) contacts are provided by Asp-258 and Glu-259.

This sequence belongs to the anthranilate phosphoribosyltransferase family. As to quaternary structure, homodimer. The cofactor is Mg(2+).

The catalysed reaction is N-(5-phospho-beta-D-ribosyl)anthranilate + diphosphate = 5-phospho-alpha-D-ribose 1-diphosphate + anthranilate. It functions in the pathway amino-acid biosynthesis; L-tryptophan biosynthesis; L-tryptophan from chorismate: step 2/5. In terms of biological role, catalyzes the transfer of the phosphoribosyl group of 5-phosphorylribose-1-pyrophosphate (PRPP) to anthranilate to yield N-(5'-phosphoribosyl)-anthranilate (PRA), the second step in tryptophan biosynthesis. This Saccharomyces cerevisiae (strain ATCC 204508 / S288c) (Baker's yeast) protein is Anthranilate phosphoribosyltransferase.